The primary structure comprises 144 residues: Large ribosomal subunit protein uL11 (144 aa).

It belongs to the universal ribosomal protein uL11 family. Part of the ribosomal stalk of the 50S ribosomal subunit. Interacts with L10 and the large rRNA to form the base of the stalk. L10 forms an elongated spine to which L12 dimers bind in a sequential fashion forming a multimeric L10(L12)X complex. Post-translationally, one or more lysine residues are methylated.

Forms part of the ribosomal stalk which helps the ribosome interact with GTP-bound translation factors. The protein is Large ribosomal subunit protein uL11 of Frankia alni (strain DSM 45986 / CECT 9034 / ACN14a).